The following is a 361-amino-acid chain: RLA class I histocompatibility antigen, alpha chain 19-1 (361 aa).

The N-terminal stretch at 1 to 24 (MGSIPPRTLLLLLAGALTLKDTQA) is a signal peptide. Residues 25–114 (GSHSMRYFYT…ALRYYNQSAA (90 aa)) form an alpha-1 region. Topologically, residues 25-308 (GSHSMRYFYT…EPPAQPTALI (284 aa)) are extracellular. N-linked (GlcNAc...) asparagine glycosylation occurs at Asn110. Positions 115–206 (GSHTFQTMFG…EMGKETLQRA (92 aa)) are alpha-2. 2 cysteine pairs are disulfide-bonded: Cys125–Cys188 and Cys227–Cys283. Residues 207 to 298 (DPPKAHVTHH…GLPEPLTLTW (92 aa)) are alpha-3. Residues 209–297 (PKAHVTHHPA…EGLPEPLTLT (89 aa)) form the Ig-like C1-type domain. A connecting peptide region spans residues 299 to 308 (EPPAQPTALI). Residues 309-329 (VGIVAGVLGVLLILGAVVAVV) form a helical membrane-spanning segment. The Cytoplasmic portion of the chain corresponds to 330–361 (RRKKHSSDGKGGRYTPAAGGHRDQGSDDSLMP). A disordered region spans residues 335–361 (SSDGKGGRYTPAAGGHRDQGSDDSLMP). Phosphoserine is present on residues Ser355 and Ser358.

It belongs to the MHC class I family. In terms of assembly, heterodimer of an alpha chain and a beta chain (beta-2-microglobulin).

The protein resides in the membrane. Its function is as follows. Involved in the presentation of foreign antigens to the immune system. This is RLA class I histocompatibility antigen, alpha chain 19-1 from Oryctolagus cuniculus (Rabbit).